We begin with the raw amino-acid sequence, 277 residues long: Putative phosphoenolpyruvate synthase regulatory protein (277 aa).

157–164 contacts ADP; the sequence is GVSRSGKT.

The protein belongs to the pyruvate, phosphate/water dikinase regulatory protein family. PSRP subfamily.

It catalyses the reaction [pyruvate, water dikinase] + ADP = [pyruvate, water dikinase]-phosphate + AMP + H(+). The enzyme catalyses [pyruvate, water dikinase]-phosphate + phosphate + H(+) = [pyruvate, water dikinase] + diphosphate. Bifunctional serine/threonine kinase and phosphorylase involved in the regulation of the phosphoenolpyruvate synthase (PEPS) by catalyzing its phosphorylation/dephosphorylation. The protein is Putative phosphoenolpyruvate synthase regulatory protein of Vibrio vulnificus (strain CMCP6).